The primary structure comprises 1156 residues: Cartilage intermediate layer protein 2 (1156 aa).

Positions 1-20 are cleaved as a signal peptide; it reads MASLLPLLCLCVVAAHLAGA. One can recognise a TSP type-1 domain in the interval 146–197; it reads EASWGAWGPWGPCSGSCGPGRRLRRRHCPSPAGDACPGRPLEAQKCVRPRCP. 3 cysteine pairs are disulfide-bonded: C158–C191, C162–C196, and C173–C181. Residues N276, N308, and N329 are each glycosylated (N-linked (GlcNAc...) asparagine). One can recognise an Ig-like C2-type domain in the interval 292–376; the sequence is PYLVKHPESR…AVRSGTARLT (85 aa). C313 and C359 are disulfide-bonded. The interval 1134–1156 is disordered; sequence SEAAQAQARASGPLRTRRGRVRQ.

In terms of processing, may be cleaved into 2 chains possibly by a furin-like protease upon or preceding secretion. Expressed in articular chondrocytes but not in knee meniscal cartilage cells. Localizes to the intermediate to deep zone of articular cartilage.

It localises to the secreted. Its subcellular location is the extracellular space. The protein resides in the extracellular matrix. In terms of biological role, may play a role in cartilage scaffolding. This is Cartilage intermediate layer protein 2 (CILP2) from Homo sapiens (Human).